A 317-amino-acid chain; its full sequence is Probable pathogenesis-related protein CaO19.6200 (317 aa).

The first 23 residues, 1 to 23 (MKFLQSFPVILAVFSFAANLVSS), serve as a signal peptide directing secretion. Disordered regions lie at residues 52–116 (RLET…TTVT) and 155–179 (PSAP…DSQL). Positions 58 to 76 (PTSTTTTIVIPSSKPSSPE) are enriched in low complexity. 2 stretches are compositionally biased toward polar residues: residues 84-116 (QPMF…TTVT) and 168-179 (ENNSGTNDDSQL). N-linked (GlcNAc...) asparagine glycosylation occurs at asparagine 169. The SCP domain maps to 187-297 (LEAHNIKRAS…GWGLYIICNY (111 aa)).

The protein belongs to the CRISP family.

The protein localises to the secreted. Secreted protein that acts as a virulence factor during infections. This is Probable pathogenesis-related protein CaO19.6200 from Candida albicans (strain SC5314 / ATCC MYA-2876) (Yeast).